The following is a 146-amino-acid chain: Inclusion membrane protein D (146 aa).

The next 2 membrane-spanning stretches (helical) occupy residues 38–58 (AAVAVATILAIALLVVAGLLF) and 68–88 (VVAASLFFGVGAFLLGGALVG).

It is found in the secreted. It localises to the host vacuole. The protein localises to the host pathogen-containing vacuole. Its subcellular location is the host pathogen-containing vacuole membrane. In terms of biological role, host inclusion membrane protein probably involved in early modification events of the chlamydial inclusion. The protein is Inclusion membrane protein D of Chlamydia trachomatis serovar L2 (strain ATCC VR-902B / DSM 19102 / 434/Bu).